We begin with the raw amino-acid sequence, 586 residues long: Protein HOL1 (586 aa).

The Extracellular segment spans residues 1–66 (MDKYTNRDHP…NWSSWRKLAH (66 aa)). The chain crosses the membrane as a helical span at residues 67–87 (FGLMAFITAFTAATSNDAGAA). The Cytoplasmic portion of the chain corresponds to 88–103 (QDSLNEIYGISYDSMN). A helical membrane pass occupies residues 104-124 (TGAGVLFLGIGWSTLFLAPFA). At 125-130 (NLYGRK) the chain is on the extracellular side. The chain crosses the membrane as a helical span at residues 131–151 (ITYIVCTTLGLFGALWFALAK). At 152-189 (RTSDTIWSQLFVGISESCAEAQVQLSLSDIFFQHQLGS) the chain is on the cytoplasmic side. Residues 190–210 (VLTVYIMCTSIGTFLGPLIAG) form a helical membrane-spanning segment. At 211–219 (YISAFTNFR) the chain is on the extracellular side. The chain crosses the membrane as a helical span at residues 220–240 (WVGWVAVIISGGLLITIIFGC). Topologically, residues 241–362 (EETYFDRGQY…YFKYLKINLR (122 aa)) are cytoplasmic. A helical transmembrane segment spans residues 363 to 383 (MFLFPPVWLSGMFWGIQDVFL). The Extracellular segment spans residues 384–413 (TFYLTTQESAYYEPPWNYSDFGVAIMNVPT). The chain crosses the membrane as a helical span at residues 414-434 (LIGAVIGCICAGIVSDYFVLW). At 435-448 (MARHNRGILEAEFR) the chain is on the cytoplasmic side. Residues 449-469 (LYFSIATAIIGPAGLLMFGIG) traverse the membrane as a helical segment. Over 470–477 (TARQWPWQ) the chain is Extracellular. Residues 478–498 (AIYVGLGFVGFAWGCSGDIAM) form a helical membrane-spanning segment. At 499–508 (AYLMDCYPDM) the chain is on the cytoplasmic side. The chain crosses the membrane as a helical span at residues 509-529 (VLEGMVCTAIINNTISCIFTF). At 530 to 544 (TCSDWLAASGTENTY) the chain is on the extracellular side. The chain crosses the membrane as a helical span at residues 545–565 (IALAVINFGITAFALPMYYYG). The Cytoplasmic segment spans residues 566 to 586 (KRIRLWTKRWYLQSVNLRDGV).

It localises to the membrane. Functionally, seems to be involved in the uptake of several cations and of histidinol. The polypeptide is Protein HOL1 (HOL1) (Saccharomyces cerevisiae (strain ATCC 204508 / S288c) (Baker's yeast)).